Here is a 384-residue protein sequence, read N- to C-terminus: ATP phosphoribosyltransferase regulatory subunit (384 aa).

Belongs to the class-II aminoacyl-tRNA synthetase family. HisZ subfamily. Heteromultimer composed of HisG and HisZ subunits.

It is found in the cytoplasm. It participates in amino-acid biosynthesis; L-histidine biosynthesis; L-histidine from 5-phospho-alpha-D-ribose 1-diphosphate: step 1/9. In terms of biological role, required for the first step of histidine biosynthesis. May allow the feedback regulation of ATP phosphoribosyltransferase activity by histidine. This is ATP phosphoribosyltransferase regulatory subunit from Paracidovorax citrulli (strain AAC00-1) (Acidovorax citrulli).